A 179-amino-acid chain; its full sequence is MTNTERSSSWKASSIPDQPMWYFGYGSNMKASSMADRKVTPLSTKIVTVPTHFVTFDIFGIPYSEPSYASLEQFPDGGTGKLDLVHHISRTQVLPACGVAHLLSPNDFHRLLVTEGSGVVYNLVEVQAYEMNKDGQPIPAPFTVHTLKAKWPQRPNGTPSARYMVRFLGLLSSSTYYQY.

This sequence belongs to the class-I pyridoxal-phosphate-dependent aminotransferase family.

The catalysed reaction is an alpha-(gamma-L-glutamyl)-L-amino acid = 5-oxo-L-proline + an L-alpha-amino acid. It functions in the pathway mycotoxin biosynthesis. Gamma-glutamyl cyclotransferase; part of the gene cluster that mediates the biosynthesis of 11'-deoxyverticillin A, one of the dimeric epipolythiodioxopiperazines (ETPs) from the verticillin family that act as mycotoxins. 11'-deoxyverticillin A is required for normal conidiation. The nonribosomal peptide synthetase verP is speculated to be responsible for condensation of amino acids to form the carbon skeleton of verticillin, whereas the cluster-specific tailoring enzymes are involved in further modifications leading to the production of 11'-deoxyverticillin A. The protein is Gamma-glutamyl cyclotransferase verK of Clonostachys rogersoniana.